Consider the following 1328-residue polypeptide: Protein turtle homolog B (1328 aa).

The signal sequence occupies residues 1 to 17; that stretch reads MIWYVATLIASVISTRG. The Extracellular portion of the chain corresponds to 18–722; it reads LVAQGAHGLR…DLTDDGLARP (705 aa). 5 Ig-like domains span residues 30-115, 139-226, 228-320, 324-415, and 420-504; these read PEFV…ECKV, PTFT…LLVQ, PPFI…AYLT, PARV…ARLV, and PYFT…THLT. Intrachain disulfides connect cysteine 45/cysteine 113 and cysteine 161/cysteine 208. Residues asparagine 241 and asparagine 258 are each glycosylated (N-linked (GlcNAc...) asparagine). 3 disulfide bridges follow: cysteine 250-cysteine 303, cysteine 346-cysteine 397, and cysteine 442-cysteine 488. Fibronectin type-III domains lie at 512–604 and 614–708; these read APGS…TLAF and LVTP…STDI. Residue asparagine 624 is glycosylated (N-linked (GlcNAc...) asparagine). Residues 723-743 form a helical membrane-spanning segment; it reads VLAGIVATICFLAAAILFSTL. Residues 744–1328 lie on the Cytoplasmic side of the membrane; that stretch reads AACFVNKQRK…EPPTTLPTSG (585 aa). Disordered stretches follow at residues 758–817, 914–1040, and 1106–1328; these read RKKD…EKEL, PMSS…PEPW, and KSPG…PTSG. Serine 775, serine 783, and serine 794 each carry phosphoserine. Low complexity predominate over residues 990 to 1001; that stretch reads SPLSSVMSSPPL. 3 stretches are compositionally biased toward polar residues: residues 1018–1033, 1129–1141, and 1199–1214; these read ENAS…TPTG, LVSQ…TSQG, and SRLS…SRTG. Arginine 1136 is modified (omega-N-methylarginine). 2 positions are modified to phosphoserine: serine 1207 and serine 1215. A compositionally biased stretch (low complexity) spans 1246–1273; it reads SFSRKSTPSSTGSPSQSSRSGSPSYRPT. 2 stretches are compositionally biased toward pro residues: residues 1284-1295 and 1318-1328; these read PSPPPGPAPPAP and PEPPTTLPTSG.

It belongs to the immunoglobulin superfamily. Turtle family. In terms of assembly, found in a complex with MAGI2 and NLGN2, where it interacts with MAGI2 (via PDZ 5 and PDZ 6 domains). Post-translationally, N-glycosylated and sialylated. Not significantly O-glycosylated. Detected in brain.

Its subcellular location is the cell membrane. The protein localises to the postsynaptic cell membrane. It localises to the postsynaptic density. Transmembrane protein which is abundantly expressed in interneurons, where it may regulate inhibitory synapse development. May mediate homophilic cell adhesion. The protein is Protein turtle homolog B of Mus musculus (Mouse).